The chain runs to 475 residues: ATP synthase subunit beta, chloroplastic (475 aa).

155–162 serves as a coordination point for ATP; sequence GGAGVGKT.

This sequence belongs to the ATPase alpha/beta chains family. F-type ATPases have 2 components, CF(1) - the catalytic core - and CF(0) - the membrane proton channel. CF(1) has five subunits: alpha(3), beta(3), gamma(1), delta(1), epsilon(1). CF(0) has four main subunits: a(1), b(1), b'(1) and c(9-12).

It is found in the plastid. The protein resides in the chloroplast thylakoid membrane. It carries out the reaction ATP + H2O + 4 H(+)(in) = ADP + phosphate + 5 H(+)(out). Its function is as follows. Produces ATP from ADP in the presence of a proton gradient across the membrane. The catalytic sites are hosted primarily by the beta subunits. In Pyropia yezoensis (Susabi-nori), this protein is ATP synthase subunit beta, chloroplastic.